The following is a 470-amino-acid chain: 6-phospho-beta-galactosidase (470 aa).

D-galactose 6-phosphate is bound by residues glutamine 19, histidine 116, asparagine 159, glutamate 160, and asparagine 297. Catalysis depends on glutamate 160, which acts as the Proton donor. Glutamate 375 (nucleophile) is an active-site residue. The D-galactose 6-phosphate site is built by serine 430, tryptophan 431, lysine 437, and tyrosine 439.

This sequence belongs to the glycosyl hydrolase 1 family.

The catalysed reaction is a 6-phospho-beta-D-galactoside + H2O = D-galactose 6-phosphate + an alcohol. It functions in the pathway carbohydrate metabolism; lactose degradation; D-galactose 6-phosphate and beta-D-glucose from lactose 6-phosphate: step 1/1. The chain is 6-phospho-beta-galactosidase from Staphylococcus aureus (strain Mu3 / ATCC 700698).